Reading from the N-terminus, the 199-residue chain is Peptidyl-tRNA hydrolase (199 aa).

Tyr-18 is a binding site for tRNA. His-23 acts as the Proton acceptor in catalysis. TRNA-binding residues include Tyr-72, Asn-74, and Asn-120.

The protein belongs to the PTH family. As to quaternary structure, monomer.

It localises to the cytoplasm. It catalyses the reaction an N-acyl-L-alpha-aminoacyl-tRNA + H2O = an N-acyl-L-amino acid + a tRNA + H(+). Its function is as follows. Hydrolyzes ribosome-free peptidyl-tRNAs (with 1 or more amino acids incorporated), which drop off the ribosome during protein synthesis, or as a result of ribosome stalling. Functionally, catalyzes the release of premature peptidyl moieties from peptidyl-tRNA molecules trapped in stalled 50S ribosomal subunits, and thus maintains levels of free tRNAs and 50S ribosomes. This chain is Peptidyl-tRNA hydrolase, found in Bifidobacterium adolescentis (strain ATCC 15703 / DSM 20083 / NCTC 11814 / E194a).